A 255-amino-acid polypeptide reads, in one-letter code: 4-hydroxy-tetrahydrodipicolinate reductase (255 aa).

Residues 8 to 13 (GASGRM), 89 to 91 (GTT), and 114 to 117 (SSNY) contribute to the NAD(+) site. The active-site Proton donor/acceptor is the His146. A (S)-2,3,4,5-tetrahydrodipicolinate-binding site is contributed by His147. Lys150 serves as the catalytic Proton donor. (S)-2,3,4,5-tetrahydrodipicolinate is bound at residue 156–157 (GT).

Belongs to the DapB family.

It localises to the cytoplasm. It carries out the reaction (S)-2,3,4,5-tetrahydrodipicolinate + NAD(+) + H2O = (2S,4S)-4-hydroxy-2,3,4,5-tetrahydrodipicolinate + NADH + H(+). The catalysed reaction is (S)-2,3,4,5-tetrahydrodipicolinate + NADP(+) + H2O = (2S,4S)-4-hydroxy-2,3,4,5-tetrahydrodipicolinate + NADPH + H(+). The protein operates within amino-acid biosynthesis; L-lysine biosynthesis via DAP pathway; (S)-tetrahydrodipicolinate from L-aspartate: step 4/4. Catalyzes the conversion of 4-hydroxy-tetrahydrodipicolinate (HTPA) to tetrahydrodipicolinate. The chain is 4-hydroxy-tetrahydrodipicolinate reductase from Methanoregula boonei (strain DSM 21154 / JCM 14090 / 6A8).